The chain runs to 255 residues: 5'-nucleotidase SurE (255 aa).

A divalent metal cation-binding residues include aspartate 7, aspartate 8, serine 38, and asparagine 90.

This sequence belongs to the SurE nucleotidase family. It depends on a divalent metal cation as a cofactor.

The protein localises to the cytoplasm. It carries out the reaction a ribonucleoside 5'-phosphate + H2O = a ribonucleoside + phosphate. In terms of biological role, nucleotidase that shows phosphatase activity on nucleoside 5'-monophosphates. This Picrophilus torridus (strain ATCC 700027 / DSM 9790 / JCM 10055 / NBRC 100828 / KAW 2/3) protein is 5'-nucleotidase SurE.